A 308-amino-acid polypeptide reads, in one-letter code: Cilia- and flagella-associated protein 73 (308 aa).

Coiled coils occupy residues 103–134 (RIQKEKEIEQLTEVLEELKSEKERILEVLEKN) and 164–227 (LSAT…QEAK).

This sequence belongs to the CFAP73 family. Interacts with FAP100; form the modifier of inner arm (MIA) complex.

It localises to the cytoplasm. Its subcellular location is the cytoskeleton. The protein localises to the flagellum axoneme. In terms of biological role, as part of MIA, a complex associated with the outer doublet microtubules of the axoneme, may play a role in ciliary/flagellar motility by regulating the assembly and the activity of inner dynein arm. This Chlamydomonas reinhardtii (Chlamydomonas smithii) protein is Cilia- and flagella-associated protein 73.